Reading from the N-terminus, the 842-residue chain is MGRHGGPAAAGPTAPSAVRAKAVNAPSQVFVRIAILAALLLLAVYTAFGVHRLQREAMAQPGGAPLAAKADLIAGRVDANLAAQRAGLSAAADLLKRDPGATMDAAETTLRAAGGEAAAVAVVSEAGVVAVAGRDDGADWKAAALAAGASGRTNWVGSVGETGRLYVATTTSLDRARAFVIASGDASRLVADPEKGESGALALPDGKLIAARGRGVQGAGALREAFALSIEDLGDGPAAVRGQAADGALLDVAVRPVAQGALLAVAAAPTRSVANLDRQVMEGAFSLLVPLGVGIALALLLMIQSRKAEVAHREFIDSERRFRLAVEAARCGIWEWDLNGDQVYLSDVTGAMFGWGGGGVVSGQDLLERISIDHRERVRQALANAAMYGAFDVSFRVPASEQGARSLWIDARGQGFGKPGSEGHARIIGVALDVTEERIAQARAQAAENRLRDAIESVSEAFVLWDRQGRLLMCNRNYRSVFSLEPKILKPGAARAEVNRFAALAIKQDHPAPDGAKGVREAEMMDGRWIQISERRTAEGGLVMTAADITAIKTQEEARRRNEEQLQNAVAGLERSQEQLAELARKYETEKVKAESANKAKSEFLANMSHELRTPLNAINGFSEIMMNEMFGPLGDQRYKGYSQDIHSSGQHLLALINDILDMSKIEAGKMNLKFESMHLEDVAEDAVRLVRNRAEAAGLKLDIDFPQLPEIEADYRAVKQVLLNLLSNAIKFTPRAGSVTVRAEVRRDPFGDLIKVSVTDTGIGIAKEDLARLAKPFEQVESQFSKTTQGTGLGLALTKSLITMHDGVLEMHSTPGEGTTVSFTLPVRHSDQKITRDFVAA.

A run of 3 helical transmembrane segments spans residues 29-50 (VFVR…AFGV), 283-303 (GAFS…LLMI), and 343-363 (VYLS…VVSG). In terms of domain architecture, PAS spans 318-389 (SERRFRLAVE…QALANAAMYG (72 aa)). The region spanning 607 to 830 (NMSHELRTPL…TVSFTLPVRH (224 aa)) is the Histidine kinase domain. The residue at position 610 (histidine 610) is a Phosphohistidine; by autocatalysis.

It localises to the cell membrane. The enzyme catalyses ATP + protein L-histidine = ADP + protein N-phospho-L-histidine.. Its function is as follows. Member of the two-component regulatory system involved in the regulation of polar organelle development. PleC functions as a membrane-associated protein kinase that transfers phosphate to the response regulator PleD, leading to its activation. This chain is Non-motile and phage-resistance protein (pleC), found in Caulobacter vibrioides (strain ATCC 19089 / CIP 103742 / CB 15) (Caulobacter crescentus).